The sequence spans 87 residues: Small ribosomal subunit protein uS17 (87 aa).

Belongs to the universal ribosomal protein uS17 family. Part of the 30S ribosomal subunit.

Functionally, one of the primary rRNA binding proteins, it binds specifically to the 5'-end of 16S ribosomal RNA. The chain is Small ribosomal subunit protein uS17 from Anoxybacillus flavithermus (strain DSM 21510 / WK1).